The following is a 145-amino-acid chain: Angiogenin (145 aa).

The N-terminal stretch at Met-1–Ala-24 is a signal peptide. A Pyrrolidone carboxylic acid modification is found at Gln-25. His-37 (proton acceptor) is an active-site residue. Residues Arg-45 and Asp-46 each coordinate tRNA. 3 cysteine pairs are disulfide-bonded: Cys-50–Cys-104, Cys-63–Cys-115, and Cys-81–Cys-130. Positions Lys-55 to Leu-59 match the Nucleolar localization signal motif. The tRNA site is built by Cys-104 and Val-126. The Proton donor role is filled by His-137.

Belongs to the pancreatic ribonuclease family. As to quaternary structure, homodimer. Interacts with RNH1; inhibiting ANG ribonuclease activity. Interacts with PCNA.

The protein resides in the secreted. It is found in the nucleus. The protein localises to the nucleolus. Its subcellular location is the cytoplasm. It localises to the stress granule. Its activity is regulated as follows. Has weak tRNA ribonuclease activity by itself due to partial autoinhibition by its C-terminus (residues 139-145), which folds into a short alpha-helix that partially occludes the substrate-binding site. In absence of stress, the ribonuclease activity is inhibited by RNH1 in the cytoplasm. In response to stress, dissociates from RNH1 in the cytoplasm and associates with cytoplasmic ribosomes with vacant A-sites: ribosomes directly activate the tRNA ribonuclease activity of ANG by refolding the C-terminal alpha-helix. In response to stress, the angiogenic activity of ANG is inhibited by RNH1 in the nucleus. Its function is as follows. Secreted ribonuclease that can either promote or restrict cell proliferation of target cells, depending on the context. Endocytosed in target cells via its receptor PLXNB2 and translocates to the cytoplasm or nucleus. Under stress conditions, localizes to the cytoplasm and promotes the assembly of stress granules (SGs): specifically cleaves a subset of tRNAs within anticodon loops to produce tRNA-derived stress-induced fragments (tiRNAs), resulting in translation repression and inhibition of cell proliferation. tiRNas also prevent formation of apoptosome, thereby promoting cell survival. Preferentially cleaves RNAs between a pyrimidine and an adenosine residue, suggesting that it cleaves the anticodon loop of tRNA(Ala) (32-UUAGCAU-38) after positions 33 and 36. Cleaves a subset of tRNAs, including tRNA(Ala), tRNA(Glu), tRNA(Gly), tRNA(Lys), tRNA(Val), tRNA(His), tRNA(Asp) and tRNA(Sec). Under growth conditions and in differentiated cells, translocates to the nucleus and stimulates ribosomal RNA (rRNA) transcription, including that containing the initiation site sequences of 45S rRNA, thereby promoting cell growth and proliferation. Angiogenin induces vascularization of normal and malignant tissues via its ability to promote rRNA transcription. Involved in hematopoietic stem and progenitor cell (HSPC) growth and survival by promoting rRNA transcription in growth conditions and inhibiting translation in response to stress, respectively. Mediates the crosstalk between myeloid and intestinal epithelial cells to protect the intestinal epithelial barrier integrity: secreted by myeloid cells and promotes intestinal epithelial cells proliferation and survival. Also mediates osteoclast-endothelial cell crosstalk in growing bone: produced by osteoclasts and protects the neighboring vascular cells against senescence by promoting rRNA transcription. The chain is Angiogenin from Mus musculus (Mouse).